We begin with the raw amino-acid sequence, 163 residues long: Ribosome maturation factor RimM (163 aa).

The region spanning 92 to 161 (PGEYYHHDLI…AETVTVNAAF (70 aa)) is the PRC barrel domain.

It belongs to the RimM family. As to quaternary structure, binds ribosomal protein uS19.

The protein resides in the cytoplasm. Its function is as follows. An accessory protein needed during the final step in the assembly of 30S ribosomal subunit, possibly for assembly of the head region. Essential for efficient processing of 16S rRNA. May be needed both before and after RbfA during the maturation of 16S rRNA. It has affinity for free ribosomal 30S subunits but not for 70S ribosomes. This is Ribosome maturation factor RimM from Sphingopyxis alaskensis (strain DSM 13593 / LMG 18877 / RB2256) (Sphingomonas alaskensis).